We begin with the raw amino-acid sequence, 531 residues long: T-complex protein 1 subunit zeta (531 aa).

The residue at position 2 (A2) is an N-acetylalanine. K5 carries the post-translational modification N6-acetyllysine. G39 provides a ligand contact to ADP. ATP is bound at residue G39. D90 lines the Mg(2+) pocket. ADP contacts are provided by G91, T92, T93, S94, T158, and K159. Positions 91, 92, and 93 each coordinate ATP. An N6-acetyllysine modification is found at K199. Phosphoserine is present on S205. Residue K251 forms a Glycyl lysine isopeptide (Lys-Gly) (interchain with G-Cter in SUMO2) linkage. N6-acetyllysine occurs at positions 287, 365, 377, and 388. Residue A411 participates in ADP binding. 4 residues coordinate ATP: A411, G412, D496, and K501. D496 provides a ligand contact to ADP.

Belongs to the TCP-1 chaperonin family. In terms of assembly, component of the chaperonin-containing T-complex (TRiC), a hexadecamer composed of two identical back-to-back stacked rings enclosing a protein folding chamber. Each ring is made up of eight different subunits: TCP1/CCT1, CCT2, CCT3, CCT4, CCT5, CCT6A/CCT6, CCT7, CCT8. Interacts with PACRG.

It localises to the cytoplasm. It catalyses the reaction ATP + H2O = ADP + phosphate + H(+). In terms of biological role, component of the chaperonin-containing T-complex (TRiC), a molecular chaperone complex that assists the folding of actin, tubulin and other proteins upon ATP hydrolysis. The TRiC complex mediates the folding of WRAP53/TCAB1, thereby regulating telomere maintenance. The protein is T-complex protein 1 subunit zeta (CCT6) of Oryctolagus cuniculus (Rabbit).